A 314-amino-acid polypeptide reads, in one-letter code: Ribosomal RNA small subunit methyltransferase H (314 aa).

Residues 34–36 (GGH), aspartate 54, phenylalanine 83, aspartate 104, and glutamine 111 contribute to the S-adenosyl-L-methionine site.

The protein belongs to the methyltransferase superfamily. RsmH family.

The protein resides in the cytoplasm. It catalyses the reaction cytidine(1402) in 16S rRNA + S-adenosyl-L-methionine = N(4)-methylcytidine(1402) in 16S rRNA + S-adenosyl-L-homocysteine + H(+). Its function is as follows. Specifically methylates the N4 position of cytidine in position 1402 (C1402) of 16S rRNA. The protein is Ribosomal RNA small subunit methyltransferase H of Ligilactobacillus salivarius (strain UCC118) (Lactobacillus salivarius).